We begin with the raw amino-acid sequence, 197 residues long: Pyridoxal 5'-phosphate synthase subunit PdxT (197 aa).

Residue 53 to 55 coordinates L-glutamine; that stretch reads GES. The active-site Nucleophile is the C85. L-glutamine contacts are provided by residues R114 and 142 to 143; that span reads IR. Active-site charge relay system residues include H179 and E181.

This sequence belongs to the glutaminase PdxT/SNO family. In terms of assembly, in the presence of PdxS, forms a dodecamer of heterodimers. Only shows activity in the heterodimer.

It carries out the reaction aldehydo-D-ribose 5-phosphate + D-glyceraldehyde 3-phosphate + L-glutamine = pyridoxal 5'-phosphate + L-glutamate + phosphate + 3 H2O + H(+). The enzyme catalyses L-glutamine + H2O = L-glutamate + NH4(+). It participates in cofactor biosynthesis; pyridoxal 5'-phosphate biosynthesis. Functionally, catalyzes the hydrolysis of glutamine to glutamate and ammonia as part of the biosynthesis of pyridoxal 5'-phosphate. The resulting ammonia molecule is channeled to the active site of PdxS. The sequence is that of Pyridoxal 5'-phosphate synthase subunit PdxT from Thermococcus gammatolerans (strain DSM 15229 / JCM 11827 / EJ3).